The primary structure comprises 22 residues: Peptide PGLa-B1 (22 aa).

Leucine 22 carries the post-translational modification Leucine amide.

As to expression, expressed by the skin glands.

It is found in the secreted. Functionally, has antibacterial and antifungal activity. This Xenopus borealis (Kenyan clawed frog) protein is Peptide PGLa-B1.